A 356-amino-acid polypeptide reads, in one-letter code: N-acyl-phosphatidylethanolamine-hydrolyzing phospholipase D 1 (356 aa).

Zn(2+) is bound by residues His-144 and His-146. Tyr-147 lines the an N-acyl-1,2-diacyl-sn-glycero-3-phosphoethanolamine pocket. 4 residues coordinate Zn(2+): Asp-148, His-149, His-217, and Asp-248. His-286 is a binding site for an N-acyl-1,2-diacyl-sn-glycero-3-phosphoethanolamine. Residue His-308 coordinates Zn(2+).

This sequence belongs to the NAPE-PLD family. Zn(2+) is required as a cofactor. As to expression, expressed in interneurons that are in close proximity to the primary sensory neurons. Predominantly expressed in the pharynx but can also be found in cell bodies of the dorsal and ventral nerve cords.

The catalysed reaction is an N-acyl-1,2-diacyl-sn-glycero-3-phosphoethanolamine + H2O = an N-acylethanolamine + a 1,2-diacyl-sn-glycero-3-phosphate + H(+). It catalyses the reaction 1,2-dihexadecanoyl-sn-glycero-3-phospho-(N-hexadecanoyl)-ethanolamine + H2O = 1,2-dihexadecanoyl-sn-glycero-3-phosphate + N-hexadecanoylethanolamine + H(+). It carries out the reaction N-(5Z,8Z,11Z,14Z-eicosatetraenoyl)-1,2-di-(9Z-octadecenoyl)-sn-glycero-3-phosphoethanolamine + H2O = N-(5Z,8Z,11Z,14Z-eicosatetraenoyl)-ethanolamine + 1,2-di-(9Z-octadecenoyl)-sn-glycero-3-phosphate + H(+). Functionally, D-type phospholipase that hydrolyzes N-acyl-phosphatidylethanolamines (NAPEs) to produce bioactive N-acylethanolamines/fatty acid ethanolamides (NAEs/FAEs) and phosphatidic acid. NAEs are bioactive lipids that are involved in diverse physiological processes such as growth and lifespan. This chain is N-acyl-phosphatidylethanolamine-hydrolyzing phospholipase D 1, found in Caenorhabditis elegans.